Reading from the N-terminus, the 280-residue chain is Adenosylcobinamide-GDP ribazoletransferase (280 aa).

Helical transmembrane passes span 44–64 (GVGVLVGALVAAFTALLLFVL), 69–89 (STPLVAAALGTALGVLLTGAF), 111–131 (LVIMKDSRVGAFGAIAVMLAL), 135–155 (VALLALLGAVSATLMVAALFV), 189–209 (ISVAALLTGFIWCFMALALVI), and 226–246 (ALLQALLSAVVASCVAWAVMA).

Belongs to the CobS family. Requires Mg(2+) as cofactor.

It is found in the cell inner membrane. The catalysed reaction is alpha-ribazole + adenosylcob(III)inamide-GDP = adenosylcob(III)alamin + GMP + H(+). The enzyme catalyses alpha-ribazole 5'-phosphate + adenosylcob(III)inamide-GDP = adenosylcob(III)alamin 5'-phosphate + GMP + H(+). It participates in cofactor biosynthesis; adenosylcobalamin biosynthesis; adenosylcobalamin from cob(II)yrinate a,c-diamide: step 7/7. In terms of biological role, joins adenosylcobinamide-GDP and alpha-ribazole to generate adenosylcobalamin (Ado-cobalamin). Also synthesizes adenosylcobalamin 5'-phosphate from adenosylcobinamide-GDP and alpha-ribazole 5'-phosphate. This chain is Adenosylcobinamide-GDP ribazoletransferase, found in Albidiferax ferrireducens (strain ATCC BAA-621 / DSM 15236 / T118) (Rhodoferax ferrireducens).